Reading from the N-terminus, the 372-residue chain is Transaldolase 2 (372 aa).

The active-site Schiff-base intermediate with substrate is lysine 140.

The protein belongs to the transaldolase family. Type 2 subfamily.

It localises to the cytoplasm. The enzyme catalyses D-sedoheptulose 7-phosphate + D-glyceraldehyde 3-phosphate = D-erythrose 4-phosphate + beta-D-fructose 6-phosphate. Its pathway is carbohydrate degradation; pentose phosphate pathway; D-glyceraldehyde 3-phosphate and beta-D-fructose 6-phosphate from D-ribose 5-phosphate and D-xylulose 5-phosphate (non-oxidative stage): step 2/3. In terms of biological role, transaldolase is important for the balance of metabolites in the pentose-phosphate pathway. The sequence is that of Transaldolase 2 from Streptomyces avermitilis (strain ATCC 31267 / DSM 46492 / JCM 5070 / NBRC 14893 / NCIMB 12804 / NRRL 8165 / MA-4680).